Here is a 665-residue protein sequence, read N- to C-terminus: MSEKNFYITTPIYYPSGKLHIGSAYTTIACDVLARYKRLMGYDVFYLTGLDEHGQKIQQKAEEAGITPQAYVDGMAVGVKELWQLLDISYDKFIRTTDDYHEKVVAQVFERLLAQDDIYLGEYSGWYSVSDEEFFTESQLAEVFRDEAGNVTGGIAPSGHEVEWVSEESYFLRLSKYQDRLVEFFKAHPEFITPDGRLNEMLRNFIEPGLEDLAVSRTTFTWGVPVPSNPKHVVYVWIDALLNYATALGYAQDEHGNFDKFWNGTVFHMVGKDILRFHSIYWPILLMMLDVKLPDRLIAHGWFVMKDGKMSKSKGNVVYPEMLVERYGLDPLRYYLMRNLPVGSDGTFTPEDYVGRINYELANDLGNLLNRTVSMINKYFDGQIPAYVEGVTEFDHVLAEVAEQSIADFHTHMEAVDYPRALEAVWTLISRTNKYIDETAPWVLAKDEALRDQLASVMSHLAASIRVVAHLIEPFMMETSRAVLTQLGLEEVSSLENLSLADFPADVTVVAKGTPIFPRLNMEEEIAYIKEQMEGNKPAVEKEWNPDEVELKLNKDEIKFEDFDKVEIRVAEVKEVSKVEGSDKLLQFRLDAGDGEDRQILSGIAKYYPNEQELVGKKVQIVANLKPRKMMKKYVSQGMILSAEHDGKLTLLTVDPAVPNGSVIG.

Residues 13–23 (YYPSGKLHIGS) carry the 'HIGH' region motif. The 'KMSKS' region signature appears at 309–313 (KMSKS). ATP is bound at residue Lys-312. Residues 562–665 (DFDKVEIRVA…PAVPNGSVIG (104 aa)) form the tRNA-binding domain.

It belongs to the class-I aminoacyl-tRNA synthetase family. MetG type 2B subfamily. In terms of assembly, homodimer.

The protein resides in the cytoplasm. It catalyses the reaction tRNA(Met) + L-methionine + ATP = L-methionyl-tRNA(Met) + AMP + diphosphate. Functionally, is required not only for elongation of protein synthesis but also for the initiation of all mRNA translation through initiator tRNA(fMet) aminoacylation. This chain is Methionine--tRNA ligase (metG), found in Streptococcus pneumoniae serotype 4 (strain ATCC BAA-334 / TIGR4).